The chain runs to 89 residues: DNA-directed RNA polymerase subunit omega (89 aa).

This sequence belongs to the RNA polymerase subunit omega family. In terms of assembly, the RNAP catalytic core consists of 2 alpha, 1 beta, 1 beta' and 1 omega subunit. When a sigma factor is associated with the core the holoenzyme is formed, which can initiate transcription.

The catalysed reaction is RNA(n) + a ribonucleoside 5'-triphosphate = RNA(n+1) + diphosphate. Functionally, promotes RNA polymerase assembly. Latches the N- and C-terminal regions of the beta' subunit thereby facilitating its interaction with the beta and alpha subunits. In Pasteurella multocida (strain Pm70), this protein is DNA-directed RNA polymerase subunit omega (rpoZ).